Consider the following 389-residue polypeptide: Nicotinate phosphoribosyltransferase (389 aa).

Phosphohistidine; by autocatalysis is present on histidine 216.

The protein belongs to the NAPRTase family. Post-translationally, transiently phosphorylated on a His residue during the reaction cycle. Phosphorylation strongly increases the affinity for substrates and increases the rate of nicotinate D-ribonucleotide production. Dephosphorylation regenerates the low-affinity form of the enzyme, leading to product release.

It carries out the reaction nicotinate + 5-phospho-alpha-D-ribose 1-diphosphate + ATP + H2O = nicotinate beta-D-ribonucleotide + ADP + phosphate + diphosphate. The protein operates within cofactor biosynthesis; NAD(+) biosynthesis; nicotinate D-ribonucleotide from nicotinate: step 1/1. Functionally, catalyzes the synthesis of beta-nicotinate D-ribonucleotide from nicotinate and 5-phospho-D-ribose 1-phosphate at the expense of ATP. This is Nicotinate phosphoribosyltransferase from Ralstonia nicotianae (strain ATCC BAA-1114 / GMI1000) (Ralstonia solanacearum).